A 333-amino-acid polypeptide reads, in one-letter code: Type II restriction enzyme XcyI (333 aa).

It belongs to the XcyI type II restriction endonuclease family. In terms of assembly, monomer. Requires Mg(2+) as cofactor.

It catalyses the reaction Endonucleolytic cleavage of DNA to give specific double-stranded fragments with terminal 5'-phosphates.. Its function is as follows. A P subtype restriction enzyme that recognizes the double-stranded sequence 5'-CCCGGG-3' and cleaves after C-1. The chain is Type II restriction enzyme XcyI (xcyIR) from Xanthomonas campestris pv. cyanopsidis.